A 515-amino-acid chain; its full sequence is Bifunctional NAD(P)H-hydrate repair enzyme Nnr (515 aa).

The segment at 1-227 is NAD(P)H-hydrate epimerase; sequence MTDHTMKKNP…GLDSWLAGQE (227 aa). Residues 23–225 enclose the YjeF N-terminal domain; it reads IRRGEREAAD…SLGLDSWLAG (203 aa). Residues 71–75 form an NADPHX 1; for epimerase activity region; that stretch reads NNGGD. Residues Asn-72 and Asp-135 each contribute to the K(+) site. The NADPHX 1; for epimerase activity stretch occupies residues 139 to 145; that stretch reads GTGLRQA. Asp-168 is a binding site for (6S)-NADPHX. Ser-171 is a binding site for K(+). The region spanning 234-501 is the YjeF C-terminal domain; that stretch reads SAEQLSHWLK…STLQRIVNPE (268 aa). An ADP-dependent (S)-NAD(P)H-hydrate dehydratase region spans residues 235–515; sequence AEQLSHWLKP…NHDESSNSAP (281 aa). Gly-329 serves as a coordination point for (6S)-NADPHX. Residues 375–381 are NADPHX 2; for dehydratase activity; it reads HPGEAAR. ADP-binding positions include 412 to 416 and 432 to 441; these read KGAGT and NAGMASGGMG. Asp-442 serves as a coordination point for (6S)-NADPHX.

It in the N-terminal section; belongs to the NnrE/AIBP family. The protein in the C-terminal section; belongs to the NnrD/CARKD family. K(+) serves as cofactor.

The enzyme catalyses (6S)-NADHX + ADP = AMP + phosphate + NADH + H(+). The catalysed reaction is (6S)-NADPHX + ADP = AMP + phosphate + NADPH + H(+). It catalyses the reaction (6R)-NADHX = (6S)-NADHX. It carries out the reaction (6R)-NADPHX = (6S)-NADPHX. Its function is as follows. Bifunctional enzyme that catalyzes the epimerization of the S- and R-forms of NAD(P)HX and the dehydration of the S-form of NAD(P)HX at the expense of ADP, which is converted to AMP. This allows the repair of both epimers of NAD(P)HX, a damaged form of NAD(P)H that is a result of enzymatic or heat-dependent hydration. The sequence is that of Bifunctional NAD(P)H-hydrate repair enzyme Nnr (nnr) from Escherichia coli (strain K12).